A 611-amino-acid polypeptide reads, in one-letter code: Glutamine--fructose-6-phosphate aminotransferase [isomerizing] (611 aa).

Catalysis depends on Cys2, which acts as the Nucleophile; for GATase activity. The region spanning 2 to 219 is the Glutamine amidotransferase type-2 domain; it reads CGIVGAVAER…EGDIAEIRRD (218 aa). SIS domains follow at residues 287 to 427 and 460 to 601; these read AADL…VRGT and IAEL…VDQP. Lys606 (for Fru-6P isomerization activity) is an active-site residue.

In terms of assembly, homodimer.

The protein localises to the cytoplasm. It carries out the reaction D-fructose 6-phosphate + L-glutamine = D-glucosamine 6-phosphate + L-glutamate. Functionally, catalyzes the first step in hexosamine metabolism, converting fructose-6P into glucosamine-6P using glutamine as a nitrogen source. The sequence is that of Glutamine--fructose-6-phosphate aminotransferase [isomerizing] from Pseudomonas putida (strain ATCC 47054 / DSM 6125 / CFBP 8728 / NCIMB 11950 / KT2440).